The following is a 136-amino-acid chain: Transcription antitermination protein NusB (136 aa).

It belongs to the NusB family.

Its function is as follows. Involved in transcription antitermination. Required for transcription of ribosomal RNA (rRNA) genes. Binds specifically to the boxA antiterminator sequence of the ribosomal RNA (rrn) operons. This is Transcription antitermination protein NusB from Arthrobacter sp. (strain FB24).